The sequence spans 65 residues: Putative beta-neurotoxin RjAa8 (65 aa).

The region spanning 1-64 is the LCN-type CS-alpha/beta domain; it reads KEGYPMGRDG…VWDSSTNKCG (64 aa). Intrachain disulfides connect Cys-11-Cys-63, Cys-15-Cys-37, Cys-22-Cys-44, and Cys-26-Cys-46.

This sequence belongs to the long (4 C-C) scorpion toxin superfamily. Sodium channel inhibitor family. Beta subfamily. In terms of tissue distribution, expressed by the venom gland.

It localises to the secreted. Beta toxins bind voltage-independently at site-4 of sodium channels (Nav) and shift the voltage of activation toward more negative potentials thereby affecting sodium channel activation and promoting spontaneous and repetitive firing. This is Putative beta-neurotoxin RjAa8 from Rhopalurus junceus (Caribbean blue scorpion).